Reading from the N-terminus, the 361-residue chain is Peptide chain release factor 1 (361 aa).

Glutamine 235 is modified (N5-methylglutamine).

It belongs to the prokaryotic/mitochondrial release factor family. In terms of processing, methylated by PrmC. Methylation increases the termination efficiency of RF1.

It is found in the cytoplasm. Peptide chain release factor 1 directs the termination of translation in response to the peptide chain termination codons UAG and UAA. This is Peptide chain release factor 1 from Xanthomonas oryzae pv. oryzae (strain MAFF 311018).